Reading from the N-terminus, the 312-residue chain is Molybdenum cofactor biosynthesis bifunctional protein (312 aa).

Residues Met-1–His-155 are molybdenum cofactor biosynthesis protein C. Substrate-binding positions include Leu-74–His-76 and Met-110–Glu-111. Residue Asp-125 is part of the active site. The segment at Pro-156–Ala-312 is molybdenum cofactor biosynthesis protein B.

In the N-terminal section; belongs to the MoaC family. This sequence in the C-terminal section; belongs to the MoaB/Mog family.

The catalysed reaction is (8S)-3',8-cyclo-7,8-dihydroguanosine 5'-triphosphate = cyclic pyranopterin phosphate + diphosphate. The protein operates within cofactor biosynthesis; molybdopterin biosynthesis. Its function is as follows. Catalyzes the conversion of (8S)-3',8-cyclo-7,8-dihydroguanosine 5'-triphosphate to cyclic pyranopterin monophosphate (cPMP). The protein is Molybdenum cofactor biosynthesis bifunctional protein (moaCB) of Chlorobaculum tepidum (strain ATCC 49652 / DSM 12025 / NBRC 103806 / TLS) (Chlorobium tepidum).